The following is a 219-amino-acid chain: Probable nicotinate-nucleotide adenylyltransferase (219 aa).

It belongs to the NadD family.

The catalysed reaction is nicotinate beta-D-ribonucleotide + ATP + H(+) = deamido-NAD(+) + diphosphate. The protein operates within cofactor biosynthesis; NAD(+) biosynthesis; deamido-NAD(+) from nicotinate D-ribonucleotide: step 1/1. In terms of biological role, catalyzes the reversible adenylation of nicotinate mononucleotide (NaMN) to nicotinic acid adenine dinucleotide (NaAD). The chain is Probable nicotinate-nucleotide adenylyltransferase from Erythrobacter litoralis (strain HTCC2594).